The sequence spans 514 residues: Maltose/maltodextrin transport system permease protein MalF (514 aa).

Over 1–16 (MDVIKKKHWWQSDALK) the chain is Cytoplasmic. The helical transmembrane segment at 17–36 (WSVLGLLGLLVGYLVVLMYA) threads the bilayer. The Periplasmic portion of the chain corresponds to 37–39 (QGE). The helical transmembrane segment at 40-58 (YLFAITTLILSSAGLYIFA) threads the bilayer. The Cytoplasmic segment spans residues 59–66 (NRKAYAWR). The helical transmembrane segment at 67-92 (YVYPGMAGMGLFVLFPLVCTIAIAFT) threads the bilayer. The Periplasmic segment spans residues 93–275 (NYSSTNQLTF…RVFTDEGIQK (183 aa)). Residues 276 to 306 (PFLAIFVWTVVFSLITVFLTVAVGMVLACLV) traverse the membrane as a helical segment. The 225-residue stretch at 281-505 (FVWTVVFSLI…LLVGALAIVN (225 aa)) folds into the ABC transmembrane type-1 domain. Topologically, residues 307 to 318 (QWEALRGKAVYR) are cytoplasmic. The helical transmembrane segment at 319 to 336 (VLLILPYAVPSFISILIF) threads the bilayer. Topologically, residues 337 to 369 (KGLFNQSFGEINMMLSALFGVKPAWFSDPTTAR) are periplasmic. Residues 370–392 (TMLIIVNTWLGYPYMMILCMGLL) form a helical membrane-spanning segment. The Cytoplasmic segment spans residues 393-425 (KAIPDDLYEASAMDGAGPFQNFFKITLPLLIKP). The chain crosses the membrane as a helical span at residues 426–452 (LTPLMIASFAFNFNNFVLIQLLTNGGP). Residues 453 to 483 (DRLGTTTPAGYTDLLVNYTYRIAFEGGGGQD) are Periplasmic-facing. Residues 484-505 (FGLAAAIATLIFLLVGALAIVN) form a helical membrane-spanning segment. Residues 506-514 (LKATRMKFD) lie on the Cytoplasmic side of the membrane.

This sequence belongs to the binding-protein-dependent transport system permease family. MalFG subfamily. As to quaternary structure, the complex is composed of two ATP-binding proteins (MalK), two transmembrane proteins (MalG and MalF) and a solute-binding protein (MalE). Protein stability and stable complex formation require YidC.

It localises to the cell inner membrane. Functionally, part of the ABC transporter complex MalEFGK involved in maltose/maltodextrin import. Probably responsible for the translocation of the substrate across the membrane. In Escherichia coli (strain K12), this protein is Maltose/maltodextrin transport system permease protein MalF.